Reading from the N-terminus, the 118-residue chain is Galanin peptides (118 aa).

The first 19 residues, 1-19, serve as a signal peptide directing secretion; that stretch reads MHRCVGGVCVSLIVCAFLT. Residues 20 to 30 constitute a propeptide that is removed on maturation; that stretch reads ETLGMVIAAKE. A61 is subject to Alanine amide.

Belongs to the galanin family. As to expression, strongly expressed in brain and stomach, moderately in the eye, and very weakly in heart, kidney and gills. Not detected in liver.

It localises to the secreted. In terms of biological role, endocrine hormone of the central and peripheral nervous systems that binds and activates the G protein-coupled receptors GALR1 (galr1a and galr1b) and GALR2 (galr2a and galr2b). This small neuropeptide may regulate diverse physiologic functions including contraction of smooth muscle of the gastrointestinal and genitourinary tract, growth hormone and insulin release and adrenal secretion. In Danio rerio (Zebrafish), this protein is Galanin peptides.